Reading from the N-terminus, the 282-residue chain is Large ribosomal subunit protein uL2 (282 aa).

Residues 215 to 282 (RHKGIRPTVR…IIRSRKETKK (68 aa)) are disordered. Positions 263–282 (RNPKKPSTKLIIRSRKETKK) are enriched in basic residues.

This sequence belongs to the universal ribosomal protein uL2 family. In terms of assembly, part of the 50S ribosomal subunit. Forms a bridge to the 30S subunit in the 70S ribosome.

One of the primary rRNA binding proteins. Required for association of the 30S and 50S subunits to form the 70S ribosome, for tRNA binding and peptide bond formation. It has been suggested to have peptidyltransferase activity; this is somewhat controversial. Makes several contacts with the 16S rRNA in the 70S ribosome. This is Large ribosomal subunit protein uL2 from Mesomycoplasma hyopneumoniae (strain J / ATCC 25934 / NCTC 10110) (Mycoplasma hyopneumoniae).